A 318-amino-acid chain; its full sequence is Dimethyladenosine transferase (318 aa).

The S-adenosyl-L-methionine site is built by His-37, Leu-39, Gly-64, Glu-85, Asp-113, and Asn-128.

The protein belongs to the class I-like SAM-binding methyltransferase superfamily. rRNA adenine N(6)-methyltransferase family.

It localises to the cytoplasm. The protein resides in the nucleus. It is found in the nucleolus. The enzyme catalyses adenosine(1779)/adenosine(1780) in 18S rRNA + 4 S-adenosyl-L-methionine = N(6)-dimethyladenosine(1779)/N(6)-dimethyladenosine(1780) in 18S rRNA + 4 S-adenosyl-L-homocysteine + 4 H(+). Its function is as follows. Specifically dimethylates two adjacent adenosines in the loop of a conserved hairpin near the 3'-end of 18S rRNA in the 40S particle. In Saccharomyces cerevisiae (strain ATCC 204508 / S288c) (Baker's yeast), this protein is Dimethyladenosine transferase.